The sequence spans 637 residues: tRNA 5-methylaminomethyl-2-thiouridine biosynthesis bifunctional protein MnmC (637 aa).

The tract at residues 1-20 (MSERIEWLEDGTAGGSPYSP) is disordered. The tract at residues 1 to 232 (MSERIEWLED…KRDNLQGEYQ (232 aa)) is tRNA (mnm(5)s(2)U34)-methyltransferase. The FAD-dependent cmnm(5)s(2)U34 oxidoreductase stretch occupies residues 255–637 (IGAGLAGSAV…YATRLQPSGS (383 aa)).

This sequence in the N-terminal section; belongs to the methyltransferase superfamily. tRNA (mnm(5)s(2)U34)-methyltransferase family. It in the C-terminal section; belongs to the DAO family. FAD is required as a cofactor.

It localises to the cytoplasm. The catalysed reaction is 5-aminomethyl-2-thiouridine(34) in tRNA + S-adenosyl-L-methionine = 5-methylaminomethyl-2-thiouridine(34) in tRNA + S-adenosyl-L-homocysteine + H(+). Catalyzes the last two steps in the biosynthesis of 5-methylaminomethyl-2-thiouridine (mnm(5)s(2)U) at the wobble position (U34) in tRNA. Catalyzes the FAD-dependent demodification of cmnm(5)s(2)U34 to nm(5)s(2)U34, followed by the transfer of a methyl group from S-adenosyl-L-methionine to nm(5)s(2)U34, to form mnm(5)s(2)U34. The sequence is that of tRNA 5-methylaminomethyl-2-thiouridine biosynthesis bifunctional protein MnmC from Polaromonas naphthalenivorans (strain CJ2).